The following is a 946-amino-acid chain: MKPLSSPLQQYWQTVVERLPEPLAEESLSAQAKSVLTFSDFVQDSVIAHPEWLTELESQPPQADEWQHYAAWLQEALCNVSDEAGLMRELRLFRRRIMVRIAWAQTLALVTEESILQQLSYLAETLIVAARDWLYDACCREWGTPCNAQGEAQPLLILGMGKLGGGELNFSSDIDLIFAWPEHGCTQGGRRELDNAQFFTRMGQRLIKVLDQPTQDGFVYRVDMRLRPFGESGPLVLSFAALEDYYQEQGRDWERYAMVKARIMGDSEGVYANELRAMLRPFVFRRYIDFSVIQSLRNMKGMIAREVRRRGLTDNIKLGAGGIREIEFIVQVFQLIRGGREPSLQSRSLLPTLSAIAELHLLSENDAEQLRVAYLFLRRLENLLQSINDEQTQTLPSDELNRARLAWAMDFADWPQLTGALTAHMTNVRRVFNELIGDDESETQEESLSEQWRELWQDALQEDDTTPVLAHLSEDDRKQVLTLIADFRKELDKRTIGPRGRQVLDHLMPHLLSDVCAREDAAVTLSRITALLVGIVTRTTYLELLSEFPAALKHLISLCAASPMIASQLARYPLLLDELLDPNTLYQPTATDAYRDELRQYLLRVPEDDEEQQLEALRQFKQAQLLRIAAADIAGTLPVMKVSDHLTWLAEAMIDAVVQQAWVQMVARYGKPNHLNEREGRGFAVVGYGKLGGWELGYSSDLDLIFLHDCPMDAMTDGEREIDGRQFYLRLAQRIMHLFSTRTSSGILYEVDARLRPSGAAGMLVTSAEAFADYQKNEAWTWEHQALVRARVVYGDPQLTAHFDAVRREIMTLPREGKTLQTEVREMREKMRAHLGNKHRDRFDIKADEGGITDIEFITQYLVLRYAHEKPKLTRWSDNVRILELLAQNDIMEEQEAMALTRAYTTLRDELHHLALQELPGHVSEDCFTAERELVRASWQKWLVEE.

The segment at 1-440 (MKPLSSPLQQ…VFNELIGDDE (440 aa)) is adenylyl removase. Residues 449 to 946 (SEQWRELWQD…ASWQKWLVEE (498 aa)) are adenylyl transferase.

This sequence belongs to the GlnE family. Mg(2+) serves as cofactor.

It carries out the reaction [glutamine synthetase]-O(4)-(5'-adenylyl)-L-tyrosine + phosphate = [glutamine synthetase]-L-tyrosine + ADP. It catalyses the reaction [glutamine synthetase]-L-tyrosine + ATP = [glutamine synthetase]-O(4)-(5'-adenylyl)-L-tyrosine + diphosphate. Involved in the regulation of glutamine synthetase GlnA, a key enzyme in the process to assimilate ammonia. When cellular nitrogen levels are high, the C-terminal adenylyl transferase (AT) inactivates GlnA by covalent transfer of an adenylyl group from ATP to specific tyrosine residue of GlnA, thus reducing its activity. Conversely, when nitrogen levels are low, the N-terminal adenylyl removase (AR) activates GlnA by removing the adenylyl group by phosphorolysis, increasing its activity. The regulatory region of GlnE binds the signal transduction protein PII (GlnB) which indicates the nitrogen status of the cell. The polypeptide is Bifunctional glutamine synthetase adenylyltransferase/adenylyl-removing enzyme (Escherichia coli (strain K12 / MC4100 / BW2952)).